Consider the following 61-residue polypeptide: Large ribosomal subunit protein bL32 (61 aa).

Over residues 1–18 (MAIVPKRKTSKQRKRKRQ) the composition is skewed to basic residues. The segment at 1–20 (MAIVPKRKTSKQRKRKRQTH) is disordered.

This sequence belongs to the bacterial ribosomal protein bL32 family.

The chain is Large ribosomal subunit protein bL32 (rpmF) from Mycoplasmopsis pulmonis (strain UAB CTIP) (Mycoplasma pulmonis).